Reading from the N-terminus, the 243-residue chain is Pyridoxine 5'-phosphate synthase (243 aa).

Asparagine 9 serves as a coordination point for 3-amino-2-oxopropyl phosphate. 11–12 (DH) serves as a coordination point for 1-deoxy-D-xylulose 5-phosphate. Arginine 20 is a binding site for 3-amino-2-oxopropyl phosphate. Histidine 45 (proton acceptor) is an active-site residue. Positions 47 and 52 each coordinate 1-deoxy-D-xylulose 5-phosphate. Catalysis depends on glutamate 72, which acts as the Proton acceptor. Threonine 102 provides a ligand contact to 1-deoxy-D-xylulose 5-phosphate. Catalysis depends on histidine 193, which acts as the Proton donor. Residues glycine 194 and 215–216 (GH) contribute to the 3-amino-2-oxopropyl phosphate site.

Belongs to the PNP synthase family. Homooctamer; tetramer of dimers.

It localises to the cytoplasm. It carries out the reaction 3-amino-2-oxopropyl phosphate + 1-deoxy-D-xylulose 5-phosphate = pyridoxine 5'-phosphate + phosphate + 2 H2O + H(+). Its pathway is cofactor biosynthesis; pyridoxine 5'-phosphate biosynthesis; pyridoxine 5'-phosphate from D-erythrose 4-phosphate: step 5/5. Functionally, catalyzes the complicated ring closure reaction between the two acyclic compounds 1-deoxy-D-xylulose-5-phosphate (DXP) and 3-amino-2-oxopropyl phosphate (1-amino-acetone-3-phosphate or AAP) to form pyridoxine 5'-phosphate (PNP) and inorganic phosphate. In Shigella boydii serotype 4 (strain Sb227), this protein is Pyridoxine 5'-phosphate synthase.